The chain runs to 322 residues: tRNA N6-adenosine threonylcarbamoyltransferase (322 aa).

The Fe cation site is built by histidine 109 and histidine 113. Substrate is bound by residues 131–135 (LISGG), aspartate 164, glycine 177, aspartate 181, and asparagine 277. Aspartate 303 provides a ligand contact to Fe cation.

The protein belongs to the KAE1 / TsaD family. Requires Fe(2+) as cofactor.

Its subcellular location is the cytoplasm. The enzyme catalyses L-threonylcarbamoyladenylate + adenosine(37) in tRNA = N(6)-L-threonylcarbamoyladenosine(37) in tRNA + AMP + H(+). Its function is as follows. Required for the formation of a threonylcarbamoyl group on adenosine at position 37 (t(6)A37) in tRNAs that read codons beginning with adenine. Is involved in the transfer of the threonylcarbamoyl moiety of threonylcarbamoyl-AMP (TC-AMP) to the N6 group of A37, together with TsaE and TsaB. TsaD likely plays a direct catalytic role in this reaction. The chain is tRNA N6-adenosine threonylcarbamoyltransferase from Mesomycoplasma hyopneumoniae (strain 232) (Mycoplasma hyopneumoniae).